A 498-amino-acid chain; its full sequence is L-amino acid oxidase Bs29 (498 aa).

Positions 1-3 are cleaved as a signal peptide; sequence SCA. A disulfide bridge connects residues C12 and C175. FAD contacts are provided by residues 45-46, 65-66, R73, and 89-92; these read MS, EA, and GPMR. Residue R92 participates in substrate binding. N-linked (GlcNAc...) asparagine glycosylation is present at N174. H225 is a binding site for substrate. Position 263 (V263) interacts with FAD. A disulfide bridge connects residues C333 and C414. A substrate-binding site is contributed by Y374. FAD contacts are provided by residues E459 and 466 to 471; that span reads GWIDST. Residue 466 to 467 coordinates substrate; sequence GW.

This sequence belongs to the flavin monoamine oxidase family. FIG1 subfamily. In terms of assembly, monomer. This is in contrast with most of its orthologs, that are non-covalently linked homodimers. It depends on FAD as a cofactor. Expressed by the venom gland.

It is found in the secreted. It catalyses the reaction an L-alpha-amino acid + O2 + H2O = a 2-oxocarboxylate + H2O2 + NH4(+). The catalysed reaction is L-leucine + O2 + H2O = 4-methyl-2-oxopentanoate + H2O2 + NH4(+). Its function is as follows. Catalyzes an oxidative deamination of predominantly hydrophobic and aromatic L-amino acids, thus producing hydrogen peroxide that may contribute to the diverse toxic effects of this enzyme. Shows activity on L-Leu. Damage cell membranes of the Gram-positive bacteria S.aureus (MIC=4 ug/ml and MBC=8 ug/ml) and the Gram-negative bacteria A.baumanni (MIC=2 ug/ml and MBC=4 ug/ml). This antibacterial activity is dependent on the production of hydrogen peroxyde, since it is inhibited by catalase, a hydrogen peroxyde scavenger. This is L-amino acid oxidase Bs29 from Bothriechis schlegelii (Eyelash palm pitviper).